A 330-amino-acid chain; its full sequence is Nitrilase 3 (330 aa).

The CN hydrolase domain maps to 4 to 273 (VKAAAVQISP…EGEVIVDLDF (270 aa)). The active-site Proton acceptor is glutamate 44. Lysine 128 functions as the Proton donor in the catalytic mechanism. Cysteine 162 serves as the catalytic Nucleophile. Residues 310-330 (RAAHPVSGAEQGPEDLRTPAA) are disordered.

Belongs to the carbon-nitrogen hydrolase superfamily. Nitrilase family.

The enzyme catalyses a nitrile + 2 H2O = a carboxylate + NH4(+). Nitrilases catalyze the mild hydrolytic conversion of organonitriles directly to the corresponding carboxylic acids. This is Nitrilase 3 from Unknown prokaryotic organism.